Reading from the N-terminus, the 1073-residue chain is ATP-dependent helicase/deoxyribonuclease subunit B (1073 aa).

Belongs to the helicase family. AddB/RexB type 2 subfamily. As to quaternary structure, heterodimer of AddA and RexB. Requires Mg(2+) as cofactor.

In terms of biological role, the heterodimer acts as both an ATP-dependent DNA helicase and an ATP-dependent, dual-direction single-stranded exonuclease. Recognizes the chi site generating a DNA molecule suitable for the initiation of homologous recombination. This subunit has 5' -&gt; 3' nuclease activity but not helicase activity. The chain is ATP-dependent helicase/deoxyribonuclease subunit B from Streptococcus equi subsp. zooepidemicus (strain MGCS10565).